We begin with the raw amino-acid sequence, 225 residues long: C-reactive protein (225 aa).

An N-terminal signal peptide occupies residues 1-19 (MEKLLWCLLIMISFSRTFG). A Pentraxin (PTX) domain is found at 24–225 (FKKAFVFPKE…DVFIKPQLWS (202 aa)). Cysteines 55 and 116 form a disulfide. The Ca(2+) site is built by asparagine 80, glutamate 157, glutamine 158, aspartate 159, and glutamine 169.

This sequence belongs to the pentraxin family. Homopentamer. Pentraxin (or pentaxin) have a discoid arrangement of 5 non-covalently bound subunits. Interacts with FCN1; may regulate monocyte activation by FCN1. Ca(2+) is required as a cofactor. As to expression, found in plasma.

The protein localises to the secreted. Displays several functions associated with host defense: it promotes agglutination, bacterial capsular swelling, phagocytosis and complement fixation through its calcium-dependent binding to phosphorylcholine. Can interact with DNA and histones and may scavenge nuclear material released from damaged circulating cells. This Mus musculus (Mouse) protein is C-reactive protein (Crp).